The following is a 477-amino-acid chain: Ribulose bisphosphate carboxylase large chain (477 aa).

The propeptide occupies 1–2 (MS). N-acetylproline is present on proline 3. Lysine 14 bears the N6,N6,N6-trimethyllysine mark. Substrate-binding residues include asparagine 123 and threonine 173. Residue lysine 175 is the Proton acceptor of the active site. Lysine 177 provides a ligand contact to substrate. Lysine 201, aspartate 203, and glutamate 204 together coordinate Mg(2+). An N6-carboxylysine modification is found at lysine 201. Histidine 294 serves as the catalytic Proton acceptor. 3 residues coordinate substrate: arginine 295, histidine 327, and serine 379.

Belongs to the RuBisCO large chain family. Type I subfamily. Heterohexadecamer of 8 large chains and 8 small chains; disulfide-linked. The disulfide link is formed within the large subunit homodimers. Mg(2+) serves as cofactor. Post-translationally, the disulfide bond which can form in the large chain dimeric partners within the hexadecamer appears to be associated with oxidative stress and protein turnover.

The protein localises to the plastid. It localises to the chloroplast. It catalyses the reaction 2 (2R)-3-phosphoglycerate + 2 H(+) = D-ribulose 1,5-bisphosphate + CO2 + H2O. The catalysed reaction is D-ribulose 1,5-bisphosphate + O2 = 2-phosphoglycolate + (2R)-3-phosphoglycerate + 2 H(+). In terms of biological role, ruBisCO catalyzes two reactions: the carboxylation of D-ribulose 1,5-bisphosphate, the primary event in carbon dioxide fixation, as well as the oxidative fragmentation of the pentose substrate in the photorespiration process. Both reactions occur simultaneously and in competition at the same active site. The polypeptide is Ribulose bisphosphate carboxylase large chain (Cichorium intybus (Chicory)).